Here is a 1098-residue protein sequence, read N- to C-terminus: Early transcription factor large subunit homolog (1098 aa).

In terms of domain architecture, Helicase ATP-binding spans 17 to 317 (KGGRAFFPCD…PNGQPLQRQQ (301 aa)). 64–71 (WQTGTGKS) lines the ATP pocket. Positions 246 to 249 (DEIH) match the DEAH box motif. The Helicase C-terminal domain occupies 489–689 (MMKDILSIIR…EGDKALRKHA (201 aa)).

This sequence belongs to the DEAD box helicase family. DEAH subfamily.

It localises to the virion. The enzyme catalyses ATP + H2O = ADP + phosphate + H(+). Its function is as follows. Putative initation factor. The chain is Early transcription factor large subunit homolog from African swine fever virus (isolate Tick/Malawi/Lil 20-1/1983) (ASFV).